A 236-amino-acid polypeptide reads, in one-letter code: MIRTLYSDTPFPPLEQALIEPNGLLAAGGDLSPERLISAYRQGIFPWFNPGEIILWWSPDPRMVLFPRELKISRSLHKTLKKNDYQIRTDSAFTEVMQACAAPREDQAGTWIHEEMIAAYTALHQMGVAHSVETWIEGELAGGLYGVAIGRAFFGESMFSRATDASKIALVHLARQLENWGYGLIDCQMKTAHLMSMGAREIPRSQFSKRLNQLNALPGQNRKWYFDFTYPGRSEQ.

This sequence belongs to the L/F-transferase family.

It is found in the cytoplasm. It catalyses the reaction N-terminal L-lysyl-[protein] + L-leucyl-tRNA(Leu) = N-terminal L-leucyl-L-lysyl-[protein] + tRNA(Leu) + H(+). The enzyme catalyses N-terminal L-arginyl-[protein] + L-leucyl-tRNA(Leu) = N-terminal L-leucyl-L-arginyl-[protein] + tRNA(Leu) + H(+). The catalysed reaction is L-phenylalanyl-tRNA(Phe) + an N-terminal L-alpha-aminoacyl-[protein] = an N-terminal L-phenylalanyl-L-alpha-aminoacyl-[protein] + tRNA(Phe). Functions in the N-end rule pathway of protein degradation where it conjugates Leu, Phe and, less efficiently, Met from aminoacyl-tRNAs to the N-termini of proteins containing an N-terminal arginine or lysine. The protein is Leucyl/phenylalanyl-tRNA--protein transferase of Nitrosomonas europaea (strain ATCC 19718 / CIP 103999 / KCTC 2705 / NBRC 14298).